A 145-amino-acid chain; its full sequence is Cell division protein SepF (145 aa).

The disordered stretch occupies residues 21–41 (DKPQESTKAKEENVKPKHETP). Positions 23 to 41 (PQESTKAKEENVKPKHETP) are enriched in basic and acidic residues.

Belongs to the SepF family. Homodimer. Interacts with FtsZ.

It is found in the cytoplasm. In terms of biological role, cell division protein that is part of the divisome complex and is recruited early to the Z-ring. Probably stimulates Z-ring formation, perhaps through the cross-linking of FtsZ protofilaments. Its function overlaps with FtsA. This Caldicellulosiruptor saccharolyticus (strain ATCC 43494 / DSM 8903 / Tp8T 6331) protein is Cell division protein SepF.